The following is a 431-amino-acid chain: CinA-like protein (431 aa).

The protein belongs to the CinA family.

This Chlorobium luteolum (strain DSM 273 / BCRC 81028 / 2530) (Pelodictyon luteolum) protein is CinA-like protein.